We begin with the raw amino-acid sequence, 737 residues long: Ribosome-releasing factor 2, mitochondrial (737 aa).

The N-terminal 36 residues, 1 to 36 (MLCNRLHKAAFAARLRPRLPATVASCRQVHNSDGTI), are a transit peptide targeting the mitochondrion. The tr-type G domain occupies 39 to 318 (KRIRNIGILA…SVLNFLPAPS (280 aa)). GTP is bound by residues 48 to 55 (AHIDAGKT), 112 to 116 (DTPGH), and 166 to 169 (NKMD).

This sequence belongs to the TRAFAC class translation factor GTPase superfamily. Classic translation factor GTPase family. EF-G/EF-2 subfamily.

It is found in the mitochondrion. In terms of biological role, mitochondrial GTPase that mediates the disassembly of ribosomes from messenger RNA at the termination of mitochondrial protein biosynthesis. Not involved in the GTP-dependent ribosomal translocation step during translation elongation. The protein is Ribosome-releasing factor 2, mitochondrial of Anopheles gambiae (African malaria mosquito).